The following is a 480-amino-acid chain: Wax ester synthase/diacylglycerol acyltransferase 7 (480 aa).

The Cytoplasmic portion of the chain corresponds to 1–193 (MTYGEEEPVS…LRSIFTIGST (193 aa)). The active-site Proton acceptor is the His135. A helical membrane pass occupies residues 194-214 (MRLLWNTTIDMLLLLATVLFL). Topologically, residues 215–329 (KDTKTPLKAG…VKDSKCRWGN (115 aa)) are lumenal. Asn252 carries an N-linked (GlcNAc...) asparagine glycan. A helical membrane pass occupies residues 330–350 (YFSFIFLPFTIGLQTDPLVYL). Over 351 to 365 (KMSKSMMARKKHSYH) the chain is Cytoplasmic. A helical membrane pass occupies residues 366–386 (AALVYFIIKIVLKVFGAKAAA). The Lumenal segment spans residues 387 to 480 (ELFDRPVRNT…KASLCERGLL (94 aa)). N-linked (GlcNAc...) asparagine glycosylation occurs at Asn395.

The protein in the N-terminal section; belongs to the long-chain O-acyltransferase family. In terms of tissue distribution, expressed in roots, stems, leaves, flowers and siliques.

The protein resides in the cell membrane. Its subcellular location is the endoplasmic reticulum membrane. It is found in the golgi apparatus membrane. The enzyme catalyses an acyl-CoA + a 1,2-diacyl-sn-glycerol = a triacyl-sn-glycerol + CoA. The catalysed reaction is a long chain fatty alcohol + a fatty acyl-CoA = a wax ester + CoA. It participates in glycerolipid metabolism; triacylglycerol biosynthesis. Its pathway is lipid metabolism. Functionally, bifunctional wax ester synthase/diacylglycerol acyltransferase that uses acyl-CoAs with 14, 16 and 18 carbons as substrates, preferably in combination with 16:0ol alcohol. Involved in cuticular wax biosynthesis. This Arabidopsis thaliana (Mouse-ear cress) protein is Wax ester synthase/diacylglycerol acyltransferase 7.